The primary structure comprises 156 residues: 6,7-dimethyl-8-ribityllumazine synthase (156 aa).

Residues phenylalanine 23, 57–59 (AFE), and 81–83 (AVI) each bind 5-amino-6-(D-ribitylamino)uracil. 86–87 (ST) is a (2S)-2-hydroxy-3-oxobutyl phosphate binding site. Catalysis depends on histidine 89, which acts as the Proton donor. Phenylalanine 114 contributes to the 5-amino-6-(D-ribitylamino)uracil binding site. Arginine 128 provides a ligand contact to (2S)-2-hydroxy-3-oxobutyl phosphate.

Belongs to the DMRL synthase family.

It carries out the reaction (2S)-2-hydroxy-3-oxobutyl phosphate + 5-amino-6-(D-ribitylamino)uracil = 6,7-dimethyl-8-(1-D-ribityl)lumazine + phosphate + 2 H2O + H(+). Its pathway is cofactor biosynthesis; riboflavin biosynthesis; riboflavin from 2-hydroxy-3-oxobutyl phosphate and 5-amino-6-(D-ribitylamino)uracil: step 1/2. In terms of biological role, catalyzes the formation of 6,7-dimethyl-8-ribityllumazine by condensation of 5-amino-6-(D-ribitylamino)uracil with 3,4-dihydroxy-2-butanone 4-phosphate. This is the penultimate step in the biosynthesis of riboflavin. The polypeptide is 6,7-dimethyl-8-ribityllumazine synthase (Brachyspira hyodysenteriae (strain ATCC 49526 / WA1)).